A 223-amino-acid chain; its full sequence is Small ribosomal subunit protein uS3 (223 aa).

One can recognise a KH type-2 domain in the interval 39–107 (VREFLHKKLA…PVQINIEEVR (69 aa)).

It belongs to the universal ribosomal protein uS3 family. Part of the 30S ribosomal subunit. Forms a tight complex with proteins S10 and S14.

Binds the lower part of the 30S subunit head. Binds mRNA in the 70S ribosome, positioning it for translation. The chain is Small ribosomal subunit protein uS3 from Francisella tularensis subsp. mediasiatica (strain FSC147).